The chain runs to 374 residues: Secondary metabolism regulator laeA (374 aa).

The interval Met-1–Pro-75 is disordered. Positions Ser-23–Asp-40 are enriched in polar residues. An S-methylmethionine modification is found at Met-207.

This sequence belongs to the methyltransferase superfamily. LaeA methyltransferase family. In terms of assembly, component of the heterotrimeric velvet complex composed of laeA, veA and velB; VeA acting as a bridging protein between laeA and velB. Self-methylates at Met-207.

The protein resides in the nucleus. The catalysed reaction is L-methionyl-[protein] + S-adenosyl-L-methionine = S-methyl-L-methionyl-[protein] + S-adenosyl-L-homocysteine. Methyltransferase that performs automethylation at Met-207. No other methyl-accepting substrate has been identified yet. Component of the velvet transcription factor complex that acts as a global regulator for secondary metabolite gene expression. Controls the expression of the sterigmatocystin, penicillin, and lovastatin gene clusters. Controls light-dependent formation of the velB-vosA complex, veA protein modification, and is required for light-mediated inhibition of sexual development. Within the velvet complex, controls light-dependent secondary metabolism. Involved in the defense response against Drosophila melanogaster larval grazing. In Emericella nidulans (Aspergillus nidulans), this protein is Secondary metabolism regulator laeA.